Reading from the N-terminus, the 1331-residue chain is Contactin-associated protein-like 2 (1331 aa).

An N-terminal signal peptide occupies residues 1–27; it reads MLAAPRAGCGAALLLWIVSSCLCRAWT. Over 28–1262 the chain is Extracellular; it reads APSTSQKCDE…IRNGVNRNSA (1235 aa). Positions 35–181 constitute an F5/8 type C domain; it reads CDEPLVSGLP…IGLRIEVYGC (147 aa). A disulfide bridge links cysteine 35 with cysteine 181. Laminin G-like domains are found at residues 187–368 and 373–552; these read VINF…SFSC and TVPV…IDMC. N-linked (GlcNAc...) asparagine glycans are attached at residues asparagine 289, asparagine 346, asparagine 363, asparagine 379, asparagine 436, asparagine 506, asparagine 507, and asparagine 546. Cysteines 336 and 368 form a disulfide. Disulfide bonds link cysteine 520–cysteine 552, cysteine 558–cysteine 569, cysteine 563–cysteine 578, and cysteine 580–cysteine 590. One can recognise an EGF-like 1 domain in the interval 554–591; the sequence is IIDRCVPNHCERGGKCSQTWDSFKCTCDETGYTGATCH. The Fibrinogen C-terminal domain occupies 592–798; it reads NSIYEPSCEA…LRCQGDRNYW (207 aa). Asparagine 630 and asparagine 735 each carry an N-linked (GlcNAc...) asparagine glycan. In terms of domain architecture, Laminin G-like 3 spans 799–963; the sequence is NAASFPNPSS…KVTSGFISGC (165 aa). Intrachain disulfides connect cysteine 936-cysteine 963, cysteine 967-cysteine 980, cysteine 974-cysteine 989, and cysteine 991-cysteine 1001. Residues 964 to 1002 enclose the EGF-like 2 domain; that stretch reads SGHCTSYGTNCENGGKCLERYHGYSCDCSNTAYDGTFCN. The region spanning 1023-1214 is the Laminin G-like 4 domain; it reads ATNARDSSSR…IQGELVESNC (192 aa). Asparagine 1116 and asparagine 1198 each carry an N-linked (GlcNAc...) asparagine glycan. Cysteine 1178 and cysteine 1214 are oxidised to a cystine. The chain crosses the membrane as a helical span at residues 1263-1283; that stretch reads IIGGVIAVVIFTILCTLVFLI. Topologically, residues 1284–1331 are cytoplasmic; sequence RYMFRHKGTYHTNEAKGAESAESADAAIMNNDPNFTETIDESKKEWLI. Serine 1303 and serine 1306 each carry phosphoserine.

It belongs to the neurexin family. Interacts (via C-terminus) with KCNA2.

It is found in the membrane. The protein localises to the cell projection. Its subcellular location is the axon. It localises to the cell junction. The protein resides in the paranodal septate junction. In terms of biological role, required for gap junction formation. Required, with CNTNAP1, for radial and longitudinal organization of myelinated axons. Plays a role in the formation of functional distinct domains critical for saltatory conduction of nerve impulses in myelinated nerve fibers. Demarcates the juxtaparanodal region of the axo-glial junction. The chain is Contactin-associated protein-like 2 (CNTNAP2) from Pongo abelii (Sumatran orangutan).